A 153-amino-acid chain; its full sequence is Mitochondrial import inner membrane translocase subunit TIM14 (153 aa).

Residues 1 to 43 lie on the Mitochondrial intermembrane side of the membrane; the sequence is MDGTGISDGSSVTGDAAAGFPAGATQAPGSKQGMDLYFDNALQ. The chain crosses the membrane as a helical span at residues 44 to 66; sequence YMGEHPVLAGVGGFLALYVGAGV. At 67–153 the chain is on the mitochondrial matrix side; it reads YKGVQTRLNG…FLEKKGIVRK (87 aa). Positions 96 to 153 constitute a J domain; sequence EALQILNLKENNLTTKKLKEVHRKIMLANHPDKGGSPYLATKINEAKDFLEKKGIVRK.

Belongs to the TIM14 family. In terms of assembly, heterodimer with PAM16. Component of the PAM complex, at least composed of mtHsp70, MGE1, TIM44, PAM16, PAM17 and PAM18.

Its subcellular location is the mitochondrion inner membrane. Its function is as follows. Essential component of the PAM complex, a complex required for the translocation of transit peptide-containing proteins from the inner membrane into the mitochondrial matrix in an ATP-dependent manner. In the complex, it is required to stimulate activity of mtHSP70 (SSC1). This is Mitochondrial import inner membrane translocase subunit TIM14 (PAM18) from Candida glabrata (strain ATCC 2001 / BCRC 20586 / JCM 3761 / NBRC 0622 / NRRL Y-65 / CBS 138) (Yeast).